A 131-amino-acid polypeptide reads, in one-letter code: Antitoxin MqsA (131 aa).

The Zn(2+) site is built by cysteine 3, cysteine 6, cysteine 37, and cysteine 40. The 54-residue stretch at 74–127 folds into the HTH cro/C1-type domain; the sequence is IVKVRKKLSLTQKEASEIFGGGVNAFSRYEKGNAQPHPSTIKLLRVLDKHPELL. A DNA-binding region (H-T-H motif) is located at residues 85 to 104; it reads QKEASEIFGGGVNAFSRYEK.

Homodimer. Crystallizes as a heterotetramer with MqsA, MqsR-MqsA(2)-MqsR. Purifies as a probable heterohexamer of 2 MqsR dimers and 1 MqsA dimer. Binds promoter DNA as a dimer. When the 2 dissociate the MsqR mRNA interferase becomes active. Requires Zn(2+) as cofactor. In terms of processing, degraded in the presence of oxidative stress, maybe by the Lon and/or ClpX proteases.

In terms of biological role, antitoxin component of a type II toxin-antitoxin (TA) system. Labile antitoxin that binds to the MqsR mRNA interferase toxin and neutralizes its endoribonuclease activity. Overexpression prevents MqsR-mediated cessation of cell growth and inhibition of cell proliferation. Initially reported to act as a cotranscription factor with MqsA. Following further experiments, the MqsR-MqsA complex does not bind DNA and all reported data are actually due to a small fraction of free MqsA alone binding DNA. Addition of MqsR to a preformed MqsA-promoter DNA complex causes dissociation of the MqsA-DNA complex, probably causing derepression of MqsA-repressed transcripts. MqsA binds to 2 palindromes in the promoter region of the mqsRA operon activating its transcription. Binds to other promoters, inducing mcbR and spy and repressing cspD among others. Binds to and represses the rpoS promoter, the master stress regulator, resulting in decreased cyclic-di-GMP, reduced stress resistance, increased cell motility and decreased biofilm formation; in these experiments 5 TA systems are missing (lacks MazEF, RelEB, ChpB, YoeB-YefM, YafQ-DinJ). An earlier study showed overexpression alone increases biofilm formation, perhaps by repressing cspD; in these experiments the 5 TA systems are present. Represses the csgD promoter. In the presence of stress, when this protein is degraded, the promoters it represses are derepressed, leading to biofilm formation. This TA system mediates cell growth during bile acid deoxycholate stress by degrading mRNA for probable deoxycholate-binding protein YgiS; bile acid detergents such as deoxycholate are important for host defense against bacterial growth in the gall bladder and duodenum. The sequence is that of Antitoxin MqsA from Escherichia coli (strain K12).